Reading from the N-terminus, the 477-residue chain is 3-isopropylmalate dehydratase large subunit (477 aa).

[4Fe-4S] cluster is bound by residues Cys347, Cys407, and Cys410. Residues 418 to 442 (LAPGERSASTSNRNFEGRQGKGGRT) form a disordered region.

Belongs to the aconitase/IPM isomerase family. LeuC type 1 subfamily. Heterodimer of LeuC and LeuD. [4Fe-4S] cluster serves as cofactor.

It carries out the reaction (2R,3S)-3-isopropylmalate = (2S)-2-isopropylmalate. The protein operates within amino-acid biosynthesis; L-leucine biosynthesis; L-leucine from 3-methyl-2-oxobutanoate: step 2/4. Its function is as follows. Catalyzes the isomerization between 2-isopropylmalate and 3-isopropylmalate, via the formation of 2-isopropylmaleate. The protein is 3-isopropylmalate dehydratase large subunit of Streptomyces avermitilis (strain ATCC 31267 / DSM 46492 / JCM 5070 / NBRC 14893 / NCIMB 12804 / NRRL 8165 / MA-4680).